We begin with the raw amino-acid sequence, 251 residues long: Pyrroloquinoline-quinone synthase (251 aa).

This sequence belongs to the PqqC family.

It carries out the reaction 6-(2-amino-2-carboxyethyl)-7,8-dioxo-1,2,3,4,7,8-hexahydroquinoline-2,4-dicarboxylate + 3 O2 = pyrroloquinoline quinone + 2 H2O2 + 2 H2O + H(+). It participates in cofactor biosynthesis; pyrroloquinoline quinone biosynthesis. In terms of biological role, ring cyclization and eight-electron oxidation of 3a-(2-amino-2-carboxyethyl)-4,5-dioxo-4,5,6,7,8,9-hexahydroquinoline-7,9-dicarboxylic-acid to PQQ. The sequence is that of Pyrroloquinoline-quinone synthase from Pseudomonas putida (strain W619).